Here is a 306-residue protein sequence, read N- to C-terminus: Glutathione transport system permease protein GsiC (306 aa).

At 1–8 (MLNYFIKR) the chain is on the cytoplasmic side. Residues 9–29 (LLGLIPTLLIVMVLVFLFVHL) traverse the membrane as a helical segment. The Periplasmic segment spans residues 30–98 (LPGDPARLAA…QEIALRFMPT (69 aa)). Residues 95-292 (FMPTFWLTVC…LEFILINLLV (198 aa)) enclose the ABC transmembrane type-1 domain. Residues 99-119 (FWLTVCSMAWAVIFGMAIGIV) traverse the membrane as a helical segment. At 120–130 (SAVWRNGWPDR) the chain is on the cytoplasmic side. The chain crosses the membrane as a helical span at residues 131–151 (IGMTLAVSGLSFPAFALGMLL). The Periplasmic segment spans residues 152–168 (MQIFSVELGWLPTVGAD). The helical transmembrane segment at 169–189 (TWLHYILPSLTLGAAVAAVMA) threads the bilayer. Residues 190–228 (RFTRASFVDVLQEDYMRTARAKGVRESLVVLKHGLRNAL) are Cytoplasmic-facing. A helical membrane pass occupies residues 229–249 (IPVVTMMGLQFGFLLGGSIVV). Residues 250-278 (EKVFNWPGLGRLLVDSVEMRDYPVIQAEV) are Periplasmic-facing. A helical membrane pass occupies residues 279–299 (LLFSLEFILINLLVDMLYAAI). Topologically, residues 300–306 (NPAIRYK) are cytoplasmic.

Belongs to the binding-protein-dependent transport system permease family. As to quaternary structure, the complex is composed of two ATP-binding proteins (GsiA), two transmembrane proteins (GsiC and GsiD) and a solute-binding protein (GsiB).

It localises to the cell inner membrane. Functionally, part of the ABC transporter complex GsiABCD involved in glutathione import. Probably responsible for the translocation of the substrate across the membrane. The protein is Glutathione transport system permease protein GsiC of Pectobacterium atrosepticum (strain SCRI 1043 / ATCC BAA-672) (Erwinia carotovora subsp. atroseptica).